Here is an 845-residue protein sequence, read N- to C-terminus: Poly(A) RNA polymerase gld-4 (845 aa).

The interval 1-55 (MNEDSRLSSSQQPSTSTPRSSIPSTMNSDEPNTCRRLSQSQEQPSTSRTCKSETP) is disordered. Low complexity predominate over residues 7–25 (LSSSQQPSTSTPRSSIPST). Polar residues predominate over residues 26 to 49 (MNSDEPNTCRRLSQSQEQPSTSRT). Mg(2+) contacts are provided by D139 and D141. Positions 276-335 (NLGHLLLRFLELYSLEFNFEEMGISPGQCCYIPKSASGARYGHKQAQPGNLALEDPLLTA) constitute a PAP-associated domain. A compositionally biased stretch (basic and acidic residues) spans 482-506 (KSLEKMPACDDNKKEEELVATRETD). 2 disordered regions span residues 482 to 733 (KSLE…SEEP) and 788 to 845 (NALT…RLQR). The segment covering 535-551 (TSTQSVNTSATVSTAAS) has biased composition (low complexity). Polar residues-rich tracts occupy residues 561–571 (PGLSSSMGNQS) and 579–588 (GINNRNNSAV). A compositionally biased stretch (basic and acidic residues) spans 605 to 620 (RESKRTQTTSEDKMQD). Residues 643–653 (SHKHRNAHPQR) are compositionally biased toward basic residues. Polar residues-rich tracts occupy residues 654–666 (QRPS…QGSD), 695–732 (RQQT…SSEE), 788–805 (NALT…TSMQ), and 819–828 (DNNSATSSTD).

In terms of assembly, interacts with gls-1 isoform C. The cofactor is Mg(2+). It depends on Mn(2+) as a cofactor. In terms of tissue distribution, germline-specific.

It is found in the cytoplasm. Its subcellular location is the cytoplasmic granule. It localises to the perinuclear region. It carries out the reaction RNA(n) + ATP = RNA(n)-3'-adenine ribonucleotide + diphosphate. Its function is as follows. Cytoplasmic poly(A) RNA polymerase that adds successive AMP monomers to the 3'-end of specific RNAs, forming a poly(A) tail. The enzymatic activity is enhanced by its interaction with gls-1. Required, together with gld-2, for early meiotic progression in male and female germ cells and for gld-1 protein accumulation in the hermaphrodite germline. In the germline, forms a complex with gls-1 which directly binds to gld-1 mRNA and prevents its degradation. In Caenorhabditis elegans, this protein is Poly(A) RNA polymerase gld-4.